The chain runs to 86 residues: Large ribosomal subunit protein bL31B (86 aa).

Belongs to the bacterial ribosomal protein bL31 family. Type B subfamily. In terms of assembly, part of the 50S ribosomal subunit.

The polypeptide is Large ribosomal subunit protein bL31B (Saccharopolyspora erythraea (strain ATCC 11635 / DSM 40517 / JCM 4748 / NBRC 13426 / NCIMB 8594 / NRRL 2338)).